Here is a 339-residue protein sequence, read N- to C-terminus: Ketol-acid reductoisomerase (NADP(+)) (339 aa).

Residues 1–182 (MRVYYDRDAD…GGGRAGIIET (182 aa)) form the KARI N-terminal Rossmann domain. NADP(+) contacts are provided by residues 24 to 27 (YGSQ), Arg48, Ser51, Ser53, and 83 to 86 (DELQ). Residue His108 is part of the active site. Gly134 serves as a coordination point for NADP(+). The KARI C-terminal knotted domain maps to 183-328 (TFREECETDL…ARLRDMMPWI (146 aa)). The Mg(2+) site is built by Asp191, Glu195, Glu227, and Glu231. Ser252 contacts substrate.

This sequence belongs to the ketol-acid reductoisomerase family. It depends on Mg(2+) as a cofactor.

It catalyses the reaction (2R)-2,3-dihydroxy-3-methylbutanoate + NADP(+) = (2S)-2-acetolactate + NADPH + H(+). The enzyme catalyses (2R,3R)-2,3-dihydroxy-3-methylpentanoate + NADP(+) = (S)-2-ethyl-2-hydroxy-3-oxobutanoate + NADPH + H(+). It participates in amino-acid biosynthesis; L-isoleucine biosynthesis; L-isoleucine from 2-oxobutanoate: step 2/4. The protein operates within amino-acid biosynthesis; L-valine biosynthesis; L-valine from pyruvate: step 2/4. In terms of biological role, involved in the biosynthesis of branched-chain amino acids (BCAA). Catalyzes an alkyl-migration followed by a ketol-acid reduction of (S)-2-acetolactate (S2AL) to yield (R)-2,3-dihydroxy-isovalerate. In the isomerase reaction, S2AL is rearranged via a Mg-dependent methyl migration to produce 3-hydroxy-3-methyl-2-ketobutyrate (HMKB). In the reductase reaction, this 2-ketoacid undergoes a metal-dependent reduction by NADPH to yield (R)-2,3-dihydroxy-isovalerate. This Nitrobacter winogradskyi (strain ATCC 25391 / DSM 10237 / CIP 104748 / NCIMB 11846 / Nb-255) protein is Ketol-acid reductoisomerase (NADP(+)).